Consider the following 432-residue polypeptide: CLOCK-interacting pacemaker (432 aa).

Disordered stretches follow at residues 71-98 and 194-315; these read ADSDKDSGFSDGSSECLSSAEQMESEDM and SYTK…SSPL. Ser246 carries the post-translational modification Phosphoserine. A compositionally biased stretch (polar residues) spans 272–283; sequence SPQTLQPVSSSH. Residues 364-395 adopt a coiled-coil conformation; it reads EITLKTKELIRQNQATQAELDQLKEQTQMFIE. Residues 408–432 are disordered; the sequence is LQASLTSGSSHSGSDLDTLSDHPDV. A compositionally biased stretch (low complexity) spans 411–424; sequence SLTSGSSHSGSDLD.

In terms of assembly, interacts with CLOCK. Forms a ternary complex with the CLOCK-BMAL1 heterodimer. Interacts with CAD and HSPA5. As to expression, expressed in the heart, kidney and liver and shows a circadian oscillation in these tissues with a peak at circadian time 14 hours (at protein level). Expressed in the brain, including the suprachiasmatic nucleus (SCN) of the brain, and in multiple peripheral tissues such as heart, liver and kidney. Exhibits a circadian oscillation in the peripheral tissues with a peak at circadian time 14 hours.

It is found in the nucleus. The protein resides in the cytoplasm. Its subcellular location is the cytosol. Its function is as follows. Transcriptional repressor which may act as a negative-feedback regulator of CLOCK-BMAL1 transcriptional activity in the circadian-clock mechanism. May stimulate BMAL1-dependent phosphorylation of CLOCK. However, the physiological relevance of these observations is unsure, since experiments in knockout mice showed that CIPC is not critially required for basic circadian clock. This chain is CLOCK-interacting pacemaker (Cipc), found in Mus musculus (Mouse).